Consider the following 98-residue polypeptide: Large ribosomal subunit protein uL23 (98 aa).

This sequence belongs to the universal ribosomal protein uL23 family. Part of the 50S ribosomal subunit. Contacts protein L29, and trigger factor when it is bound to the ribosome.

Functionally, one of the early assembly proteins it binds 23S rRNA. One of the proteins that surrounds the polypeptide exit tunnel on the outside of the ribosome. Forms the main docking site for trigger factor binding to the ribosome. This is Large ribosomal subunit protein uL23 from Rickettsia felis (strain ATCC VR-1525 / URRWXCal2) (Rickettsia azadi).